A 112-amino-acid polypeptide reads, in one-letter code: Putative iron-sulfur cluster insertion protein ErpA (112 aa).

Iron-sulfur cluster contacts are provided by C40, C104, and C106.

Belongs to the HesB/IscA family. In terms of assembly, homodimer. Requires iron-sulfur cluster as cofactor.

In terms of biological role, required for insertion of 4Fe-4S clusters. This is Putative iron-sulfur cluster insertion protein ErpA from Neisseria gonorrhoeae (strain ATCC 700825 / FA 1090).